We begin with the raw amino-acid sequence, 222 residues long: MSHLVKMENGQSQTIQEMLGCIERYNPDHLKILESYVQDQAKNNSYDLEANLAVLKLYQFNPHMLNFDITYTILLKSLTNLPHTDFVMAKCLLLPQQMKDENVQTIIDLADILERADFTLFWQRAEVNRTMFRHIAGFHDSIRKFVSHVVGTTFQTIKKDLLKELLGGIEDSTLESWIKRNGWKHQGHDLVVVATQDDKIKTKNITEKIEFENVGALMAQCL.

Positions Tyr46–Lys208 constitute a PCI domain.

The protein belongs to the eIF-3 subunit K family. As to quaternary structure, component of the eukaryotic translation initiation factor 3 (eIF-3) complex. The eIF-3 complex interacts with pix.

The protein localises to the cytoplasm. In terms of biological role, component of the eukaryotic translation initiation factor 3 (eIF-3) complex, which is involved in protein synthesis of a specialized repertoire of mRNAs and, together with other initiation factors, stimulates binding of mRNA and methionyl-tRNAi to the 40S ribosome. The eIF-3 complex specifically targets and initiates translation of a subset of mRNAs involved in cell proliferation. This chain is Eukaryotic translation initiation factor 3 subunit K, found in Drosophila grimshawi (Hawaiian fruit fly).